We begin with the raw amino-acid sequence, 509 residues long: Putative ATP-dependent RNA helicase QP509L (509 aa).

The Helicase ATP-binding domain maps to 110–262; the sequence is KKLLSPYGRF…KIILHHLGQP (153 aa). 123–130 lines the ATP pocket; it reads LNTGLGKT. Residues 215-218 carry the DEAH box motif; the sequence is DEAH.

Belongs to the DEAD box helicase family. DEAH subfamily.

The catalysed reaction is ATP + H2O = ADP + phosphate + H(+). This chain is Putative ATP-dependent RNA helicase QP509L, found in Ornithodoros (relapsing fever ticks).